The primary structure comprises 221 residues: Small ribosomal subunit protein uS2 (221 aa).

This sequence belongs to the universal ribosomal protein uS2 family.

The polypeptide is Small ribosomal subunit protein uS2 (Methanococcus maripaludis (strain C6 / ATCC BAA-1332)).